The chain runs to 738 residues: Wall-associated receptor kinase 4 (738 aa).

An N-terminal signal peptide occupies residues 1–22; it reads MKVQRLFLVAIFCLSYMQLVKG. The Extracellular portion of the chain corresponds to 23 to 335; the sequence is QTLPRCPEKC…PKGNPEYVEW (313 aa). N-linked (GlcNAc...) asparagine glycosylation is found at asparagine 34, asparagine 56, asparagine 109, asparagine 115, asparagine 132, asparagine 182, and asparagine 208. The EGF-like 1 domain maps to 232-278; that stretch reads RGETCGQVGEKKCGVNGICSNSASGIGYTCKCKGGFQGNPYLQNGCQ. 6 disulfides stabilise this stretch: cysteine 236/cysteine 250, cysteine 244/cysteine 261, cysteine 263/cysteine 277, cysteine 283/cysteine 300, cysteine 294/cysteine 309, and cysteine 311/cysteine 324. Positions 279-325 constitute an EGF-like 2; calcium-binding domain; sequence DINECTTANPIHKHNCSGDSTCENKLGHFRCNCRSRYELNTTTNTCK. A glycan (N-linked (GlcNAc...) asparagine) is linked at asparagine 293. Asparagine 318 carries N-linked (GlcNAc...) asparagine glycosylation. A helical membrane pass occupies residues 336–356; the sequence is TTIVLGTTIGFLVILLAISCI. Topologically, residues 357 to 738 are cytoplasmic; it reads EHKMKNTKDT…VAILDIEAGR (382 aa). Phosphothreonine is present on threonine 399. The 284-residue stretch at 410-693 folds into the Protein kinase domain; it reads YDENRILGQG…RVTKTKHKWS (284 aa). ATP is bound by residues 416–424 and lysine 438; that span reads LGQGGQGTV. Tyrosine 483 carries the phosphotyrosine modification. The Proton acceptor role is filled by aspartate 535. Residues threonine 569 and threonine 574 each carry the phosphothreonine modification. A Phosphotyrosine modification is found at tyrosine 582.

This sequence belongs to the protein kinase superfamily. Ser/Thr protein kinase family. In terms of tissue distribution, strictly expressed in siliques.

It localises to the membrane. It catalyses the reaction L-seryl-[protein] + ATP = O-phospho-L-seryl-[protein] + ADP + H(+). The catalysed reaction is L-threonyl-[protein] + ATP = O-phospho-L-threonyl-[protein] + ADP + H(+). Serine/threonine-protein kinase that may function as a signaling receptor of extracellular matrix component. Binding to pectin may have significance in the control of cell expansion, morphogenesis and development. The protein is Wall-associated receptor kinase 4 (WAK4) of Arabidopsis thaliana (Mouse-ear cress).